Here is a 179-residue protein sequence, read N- to C-terminus: Acireductone dioxygenase (179 aa).

Residues 1–21 (MVQAWYMDDSTEDQRKPHHLQ) are disordered. Fe(2+)-binding residues include histidine 88, histidine 90, glutamate 94, and histidine 133. Histidine 88, histidine 90, glutamate 94, and histidine 133 together coordinate Ni(2+).

Belongs to the acireductone dioxygenase (ARD) family. Monomer. Interacts with MMP14. Requires Fe(2+) as cofactor. Ni(2+) is required as a cofactor.

The protein resides in the cytoplasm. It is found in the nucleus. The protein localises to the cell membrane. The enzyme catalyses 1,2-dihydroxy-5-(methylsulfanyl)pent-1-en-3-one + O2 = 4-methylsulfanyl-2-oxobutanoate + formate + 2 H(+). It carries out the reaction 1,2-dihydroxy-5-(methylsulfanyl)pent-1-en-3-one + O2 = 3-(methylsulfanyl)propanoate + CO + formate + 2 H(+). The protein operates within amino-acid biosynthesis; L-methionine biosynthesis via salvage pathway; L-methionine from S-methyl-5-thio-alpha-D-ribose 1-phosphate: step 5/6. Catalyzes 2 different reactions between oxygen and the acireductone 1,2-dihydroxy-3-keto-5-methylthiopentene (DHK-MTPene) depending upon the metal bound in the active site. Fe-containing acireductone dioxygenase (Fe-ARD) produces formate and 2-keto-4-methylthiobutyrate (KMTB), the alpha-ketoacid precursor of methionine in the methionine recycle pathway. Ni-containing acireductone dioxygenase (Ni-ARD) produces methylthiopropionate, carbon monoxide and formate, and does not lie on the methionine recycle pathway. The chain is Acireductone dioxygenase (adi1) from Xenopus tropicalis (Western clawed frog).